Reading from the N-terminus, the 205-residue chain is Large ribosomal subunit protein uL4 (205 aa).

The disordered stretch occupies residues 54–78; the sequence is GDISGTTAKPHRQKHTGRARQGSLR. Over residues 62–71 the composition is skewed to basic residues; it reads KPHRQKHTGR.

Belongs to the universal ribosomal protein uL4 family. In terms of assembly, part of the 50S ribosomal subunit.

Functionally, one of the primary rRNA binding proteins, this protein initially binds near the 5'-end of the 23S rRNA. It is important during the early stages of 50S assembly. It makes multiple contacts with different domains of the 23S rRNA in the assembled 50S subunit and ribosome. Its function is as follows. Forms part of the polypeptide exit tunnel. This is Large ribosomal subunit protein uL4 from Ehrlichia chaffeensis (strain ATCC CRL-10679 / Arkansas).